A 361-amino-acid chain; its full sequence is Aminomethyltransferase (361 aa).

The protein belongs to the GcvT family. In terms of assembly, the glycine cleavage system is composed of four proteins: P, T, L and H.

The catalysed reaction is N(6)-[(R)-S(8)-aminomethyldihydrolipoyl]-L-lysyl-[protein] + (6S)-5,6,7,8-tetrahydrofolate = N(6)-[(R)-dihydrolipoyl]-L-lysyl-[protein] + (6R)-5,10-methylene-5,6,7,8-tetrahydrofolate + NH4(+). Its function is as follows. The glycine cleavage system catalyzes the degradation of glycine. This chain is Aminomethyltransferase, found in Phocaeicola vulgatus (strain ATCC 8482 / DSM 1447 / JCM 5826 / CCUG 4940 / NBRC 14291 / NCTC 11154) (Bacteroides vulgatus).